The primary structure comprises 390 residues: Ammonium/H(+) antiporter subunit AmhT (390 aa).

Transmembrane regions (helical) follow at residues 2 to 22, 31 to 51, 52 to 72, 94 to 114, 143 to 163, 178 to 198, 212 to 232, 266 to 286, 288 to 308, and 351 to 371; these read VIPE…TGFV, VVIF…SHLL, HFAG…EFPL, FGVT…SLII, FMLG…AVLV, LLVV…VFLF, DLFI…ALYL, LLLP…EGIP, IPLL…VGVL, and VFIL…PSIA.

Belongs to the monovalent cation:proton antiporter 2 (CPA2) transporter (TC 2.A.37) family. In terms of assembly, interacts with AmhM.

The protein localises to the cell membrane. Its activity is regulated as follows. AmhT alone exhibits antiport activity, but interaction with AmhM confers different properties, such as higher KM for potassium. Functionally, ammonium/proton antiporter that mediates the efflux of ammonium ions. Can also transport potassium or rubidium, but not sodium or lithium. In Alkalihalophilus pseudofirmus (strain ATCC BAA-2126 / JCM 17055 / OF4) (Bacillus pseudofirmus), this protein is Ammonium/H(+) antiporter subunit AmhT (amhT).